A 73-amino-acid chain; its full sequence is Mu-scoloptoxin(15)-Ssd1a (73 aa).

Positions 1 to 20 (MKFHIIFCLLAALMMTSAFA) are cleaved as a signal peptide.

Contains 2 disulfide bonds. As to expression, expressed by the venom gland.

Its subcellular location is the secreted. In terms of biological role, voltage-gated sodium channel inhibitor. The chain is Mu-scoloptoxin(15)-Ssd1a from Scolopendra dehaani (Thai centipede).